Reading from the N-terminus, the 689-residue chain is Glycine--tRNA ligase beta subunit (689 aa).

The protein belongs to the class-II aminoacyl-tRNA synthetase family. As to quaternary structure, tetramer of two alpha and two beta subunits.

The protein localises to the cytoplasm. It catalyses the reaction tRNA(Gly) + glycine + ATP = glycyl-tRNA(Gly) + AMP + diphosphate. This Photobacterium profundum (strain SS9) protein is Glycine--tRNA ligase beta subunit.